The following is a 70-amino-acid chain: Non-histone chromosomal protein H6 (70 aa).

Residues 1–70 (MPKRKSATKG…AAGDGAGNAK (70 aa)) form a disordered region. The segment covering 30–45 (AKPKKAAAPKKAVKGK) has biased composition (basic residues). Over residues 46–57 (KAAENGDAKAEA) the composition is skewed to basic and acidic residues.

This sequence belongs to the HMGN family.

The protein localises to the nucleus. It is found in the secreted. In terms of biological role, non-histone protein that probably binds to the inner side of nucleosomal DNA, altering the association between the DNA and the nucleosome octamer. Its function is as follows. Oncorhyncin III has antibacterial activity against Gram-positive and Gram-negative bacteria at submicromolar concentrations. This is Non-histone chromosomal protein H6 from Oncorhynchus mykiss (Rainbow trout).